Consider the following 435-residue polypeptide: F-box only protein 9 (435 aa).

Residues 1-25 form a disordered region; sequence MAEAEEDCHSDAVRVGDEGHESPAE. Residues 7-25 show a composition bias toward basic and acidic residues; the sequence is DCHSDAVRVGDEGHESPAE. A TPR repeat occupies 82–115; the sequence is ARELFLKAVEEEQNGALYEAIKFYRRAMQLVPDI. Ser124 bears the Phosphoserine mark. Positions 173 to 224 constitute an F-box domain; the sequence is QTHISVLPMEVLMYIFRWVVSSDLDLRSLEQLSLVCRGFYICARDPEIWRLA.

As to quaternary structure, part of the SCF (SKP1-CUL1-F-box) E3 ubiquitin-protein ligase complex SCF(FBXO9) composed of CUL1, SKP1, RBX1 and FBXO9. Interacts with TTI1 and TELO2; when TTI1 and TELO2 are phosphorylated by CK2.

It is found in the cytoplasm. It functions in the pathway protein modification; protein ubiquitination. Substrate recognition component of a SCF (SKP1-CUL1-F-box protein) E3 ubiquitin-protein ligase complex which mediates the ubiquitination and subsequent proteasomal degradation of target proteins and plays a role in several biological processes such as cell cycle, cell proliferation, or maintenance of chromosome stability. Ubiquitinates mTORC1-bound TTI1 and TELO2 when they are phosphorylated by CK2 following growth factor deprivation, leading to their degradation. In contrast, does not mediate ubiquitination of TTI1 and TELO2 when they are part of the mTORC2 complex. As a consequence, mTORC1 is inactivated to restrain cell growth and protein translation, while mTORC2 is the activated due to the relief of feedback inhibition by mTORC1. Plays a role in maintaining epithelial cell survival by regulating the turn-over of chromatin modulator PRMT4 through ubiquitination and degradation by the proteasomal pathway. Also regulates PPARgamma stability by facilitating PPARgamma/PPARG ubiquitination and thereby plays a role in adipocyte differentiation. The chain is F-box only protein 9 (Fbxo9) from Rattus norvegicus (Rat).